Here is a 352-residue protein sequence, read N- to C-terminus: MSVFAGYAACTLGAVSMLLCVSLVPQVYQQVSMLRDELTTEMEAWRLESDQIYMDMQKFGRVRRQAGGYGGYGGYGSGPSGPSGPSGPHGGFPGGPQGHFPGNTGSSNTPTLPGVIGVPPSVTGHPGGSPINPDGSPSAGPGDKCNCNTENSCPAGPAGPKGTPGHDGPDGIPGVPGVDGEDADDAKAQTQQYDGCFTCPAGPQGPPGSQGKPGARGMRGARGQAAMPGRDGSPGMPGSLGPIGPPGAAGEEGPTGEPGADVEHQIGLPGAKGTPGAPGESGDQGEQGDRGATGIAGPPGERGPQGEKGDDGPNGAAGSPGEEGEPGQDAQYCPCPQRNTNAAVSGNQGYRN.

The first 29 residues, 1–29 (MSVFAGYAACTLGAVSMLLCVSLVPQVYQ), serve as a signal peptide directing secretion. Residues 61–64 (RVRR) are furin-like endopeptidase recognition region. Disordered regions lie at residues 73-143 (GGYG…GPGD) and 156-352 (GPAG…GYRN). Residues 87 to 97 (GPHGGFPGGPQ) show a composition bias toward gly residues. Triple-helical region stretches follow at residues 156-182 (GPAGPKGTPGHDGPDGIPGVPGVDGED), 202-264 (GPQG…DVEH), 267-290 (GLPGAKGTPGAPGESGDQGEQGDR), and 294-329 (GIAGPPGERGPQGEKGDDGPNGAAGSPGEEGEPGQD). The 58-residue stretch at 202-259 (GPQGPPGSQGKPGARGMRGARGQAAMPGRDGSPGMPGSLGPIGPPGAAGEEGPTGEPG) folds into the Collagen-like domain. The segment covering 207–259 (PGSQGKPGARGMRGARGQAAMPGRDGSPGMPGSLGPIGPPGAAGEEGPTGEPG) has biased composition (low complexity). Polar residues predominate over residues 337–352 (QRNTNAAVSGNQGYRN).

Belongs to the cuticular collagen family. As to quaternary structure, collagen polypeptide chains are complexed within the cuticle by disulfide bonds and other types of covalent cross-links.

The protein localises to the secreted. It is found in the extracellular space. Functionally, secreted collagen that forms part of the nematode cuticle, which functions as an exoskeleton and a barrier to protect the worm from its environment. Secretion and subsequent incorporation into the cuticle is likely mediated by bli-4, which probably cleaves at the N-terminal consensus furin cleavage site. This is Cuticle collagen dpy-17 from Caenorhabditis elegans.